The primary structure comprises 243 residues: Glucosamine-6-phosphate deaminase (243 aa).

Aspartate 67 (proton acceptor; for enolization step) is an active-site residue. Catalysis depends on asparagine 137, which acts as the For ring-opening step. Histidine 139 (proton acceptor; for ring-opening step) is an active-site residue. Residue glutamate 144 is the For ring-opening step of the active site.

The protein belongs to the glucosamine/galactosamine-6-phosphate isomerase family. NagB subfamily.

The enzyme catalyses alpha-D-glucosamine 6-phosphate + H2O = beta-D-fructose 6-phosphate + NH4(+). It functions in the pathway amino-sugar metabolism; N-acetylneuraminate degradation; D-fructose 6-phosphate from N-acetylneuraminate: step 5/5. Its function is as follows. Catalyzes the reversible isomerization-deamination of glucosamine 6-phosphate (GlcN6P) to form fructose 6-phosphate (Fru6P) and ammonium ion. This is Glucosamine-6-phosphate deaminase from Staphylococcus epidermidis (strain ATCC 12228 / FDA PCI 1200).